Consider the following 233-residue polypeptide: Large ribosomal subunit protein uL1 (233 aa).

This sequence belongs to the universal ribosomal protein uL1 family. Part of the 50S ribosomal subunit.

Its function is as follows. Binds directly to 23S rRNA. The L1 stalk is quite mobile in the ribosome, and is involved in E site tRNA release. Functionally, protein L1 is also a translational repressor protein, it controls the translation of the L11 operon by binding to its mRNA. The sequence is that of Large ribosomal subunit protein uL1 from Photorhabdus laumondii subsp. laumondii (strain DSM 15139 / CIP 105565 / TT01) (Photorhabdus luminescens subsp. laumondii).